A 150-amino-acid polypeptide reads, in one-letter code: Transcriptional repressor NrdR (150 aa).

Residues 3 to 34 (CPFCNFEESKVVDSRATDDNTTIRRRRECLNC) fold into a zinc finger. Residues 49–139 (VLVVKKDLTR…VYRQFKDINT (91 aa)) enclose the ATP-cone domain.

The protein belongs to the NrdR family. Zn(2+) serves as cofactor.

In terms of biological role, negatively regulates transcription of bacterial ribonucleotide reductase nrd genes and operons by binding to NrdR-boxes. This is Transcriptional repressor NrdR from Clostridium botulinum (strain Alaska E43 / Type E3).